Here is a 132-residue protein sequence, read N- to C-terminus: EF-hand calcium-binding domain-containing protein 10 (132 aa).

2 EF-hand domains span residues Met-64 to Cys-99 and Glu-120 to Phe-132.

This is EF-hand calcium-binding domain-containing protein 10 (Efcab10) from Mus musculus (Mouse).